We begin with the raw amino-acid sequence, 876 residues long: Alanine--tRNA ligase (876 aa).

Residues histidine 565, histidine 569, cysteine 667, and histidine 671 each contribute to the Zn(2+) site.

Belongs to the class-II aminoacyl-tRNA synthetase family. Zn(2+) serves as cofactor.

The protein localises to the cytoplasm. It carries out the reaction tRNA(Ala) + L-alanine + ATP = L-alanyl-tRNA(Ala) + AMP + diphosphate. Catalyzes the attachment of alanine to tRNA(Ala) in a two-step reaction: alanine is first activated by ATP to form Ala-AMP and then transferred to the acceptor end of tRNA(Ala). Also edits incorrectly charged Ser-tRNA(Ala) and Gly-tRNA(Ala) via its editing domain. The sequence is that of Alanine--tRNA ligase from Staphylococcus aureus (strain Mu3 / ATCC 700698).